The chain runs to 1209 residues: Pre-mRNA-splicing factor rse1 (1209 aa).

The protein belongs to the RSE1 family. Associated with the spliceosome.

The protein localises to the nucleus. Involved in pre-mRNA splicing and cell cycle control. The polypeptide is Pre-mRNA-splicing factor rse1 (msp-5) (Neurospora crassa (strain ATCC 24698 / 74-OR23-1A / CBS 708.71 / DSM 1257 / FGSC 987)).